Reading from the N-terminus, the 251-residue chain is Orotidine 5'-phosphate decarboxylase (251 aa).

Substrate contacts are provided by residues Asp19, Lys42, 69–78 (DLKFHDIPNT), Thr133, Arg194, Gln204, Gly224, and Arg225. Residue Lys71 is the Proton donor of the active site.

It belongs to the OMP decarboxylase family. Type 1 subfamily. In terms of assembly, homodimer.

It carries out the reaction orotidine 5'-phosphate + H(+) = UMP + CO2. It participates in pyrimidine metabolism; UMP biosynthesis via de novo pathway; UMP from orotate: step 2/2. Its function is as follows. Catalyzes the decarboxylation of orotidine 5'-monophosphate (OMP) to uridine 5'-monophosphate (UMP). The sequence is that of Orotidine 5'-phosphate decarboxylase from Syntrophus aciditrophicus (strain SB).